The primary structure comprises 336 residues: Acyl-CoA-binding domain-containing protein 4 (336 aa).

The helical; Signal-anchor transmembrane segment at 12–32 threads the bilayer; sequence AVIGLLFAFLVAKLISTVIAF. The interval 40–88 is disordered; the sequence is TRSTPTSPSAADTPAAPAPPPASLDGGHGDTSDGSGSDSDSDWEGVEST. Positions 42 to 54 are enriched in low complexity; that stretch reads STPTSPSAADTPA. The segment covering 78–88 has biased composition (acidic residues); it reads SDSDWEGVEST. Positions 90 to 178 constitute an ACB domain; sequence LDEEFSAASA…VDELFPNWSM (89 aa). An acyl-CoA-binding positions include 120–124, Lys142, Lys146, and Tyr165; that span reads YGLYK. A glycan (N-linked (GlcNAc...) asparagine) is linked at Asn175. The segment at 179–202 is disordered; the sequence is GSSTKRKDEDTTVSASSSKGPMGP. Residue Asn216 is glycosylated (N-linked (GlcNAc...) asparagine). ANK repeat units lie at residues 251 to 280 and 284 to 313; these read EGRT…DVNA and EGQT…DVQI.

The protein belongs to the ACBP family. In terms of tissue distribution, highly expressed in leaves. Expressed at low levels in roots and seeds.

Its subcellular location is the endoplasmic reticulum membrane. Its function is as follows. Binds medium- and long-chain acyl-CoA esters with high affinity. Can interact in vitro with palmitoyl-CoA, linoleoyl-CoA and linolenoyl-CoA. Binds phosphatidic acid (PA) and phosphatidylcholine (PC) in vitro. May play a role in the biosynthesis of phospholipids. In Oryza sativa subsp. japonica (Rice), this protein is Acyl-CoA-binding domain-containing protein 4.